The chain runs to 464 residues: 3-deoxy-D-manno-octulosonic acid transferase (464 aa).

Residues 2–22 (MLLYYALSFILLPIYFIIILI) traverse the membrane as a helical; Signal-anchor segment. One can recognise an RPE1 insert domain in the interval 47–93 (YSLDFLHNEANKERFKGDTERRTAAYTSVREDSSTGSTSKLPLEASY). The active-site Proton acceptor is the Glu107. CMP contacts are provided by residues 311 to 312 (PR), 352 to 354 (FGE), and 377 to 380 (NILE).

Belongs to the glycosyltransferase group 1 family.

It localises to the cell inner membrane. The enzyme catalyses lipid IVA (E. coli) + CMP-3-deoxy-beta-D-manno-octulosonate = alpha-Kdo-(2-&gt;6)-lipid IVA (E. coli) + CMP + H(+). It functions in the pathway bacterial outer membrane biogenesis; LPS core biosynthesis. Involved in lipopolysaccharide (LPS) biosynthesis. Catalyzes the transfer of 3-deoxy-D-manno-octulosonate (Kdo) residue(s) from CMP-Kdo to lipid IV(A), the tetraacyldisaccharide-1,4'-bisphosphate precursor of lipid A. The polypeptide is 3-deoxy-D-manno-octulosonic acid transferase (waaA) (Rickettsia felis (strain ATCC VR-1525 / URRWXCal2) (Rickettsia azadi)).